The primary structure comprises 558 residues: Glucose-6-phosphate isomerase (558 aa).

N6-acetyllysine is present on K12. 2 positions are modified to phosphoserine: S86 and S107. At K142 the chain carries N6-acetyllysine. Position 159-160 (159-160 (GS)) interacts with D-glucose 6-phosphate. S185 is subject to Phosphoserine; by CK2. 210 to 215 (SKTFTT) is a D-glucose 6-phosphate binding site. The residue at position 250 (T250) is a Phosphothreonine. Residues Q354, E358, and H389 each contribute to the D-glucose 6-phosphate site. E358 acts as the Proton donor in catalysis. Residue H389 is part of the active site. The residue at position 454 (K454) is an N6-acetyllysine; alternate. An N6-malonyllysine; alternate modification is found at K454. At K454 the chain carries N6-succinyllysine; alternate. S455 carries the phosphoserine modification. K519 serves as a coordination point for D-glucose 6-phosphate. Residue K519 is part of the active site.

This sequence belongs to the GPI family. As to quaternary structure, homodimer; in the catalytically active form. Monomer in the secreted form. Phosphorylation at Ser-185 by CK2 has been shown to decrease enzymatic activity and may contribute to secretion by a non-classical secretory pathway. Post-translationally, ISGylated.

The protein localises to the cytoplasm. The protein resides in the secreted. The enzyme catalyses alpha-D-glucose 6-phosphate = beta-D-fructose 6-phosphate. It functions in the pathway carbohydrate degradation; glycolysis; D-glyceraldehyde 3-phosphate and glycerone phosphate from D-glucose: step 2/4. Functionally, in the cytoplasm, catalyzes the conversion of glucose-6-phosphate to fructose-6-phosphate, the second step in glycolysis, and the reverse reaction during gluconeogenesis. Besides it's role as a glycolytic enzyme, also acts as a secreted cytokine: acts as an angiogenic factor (AMF) that stimulates endothelial cell motility. Acts as a neurotrophic factor, neuroleukin, for spinal and sensory neurons. It is secreted by lectin-stimulated T-cells and induces immunoglobulin secretion. This Cricetulus griseus (Chinese hamster) protein is Glucose-6-phosphate isomerase.